A 277-amino-acid polypeptide reads, in one-letter code: Shikimate dehydrogenase (NADP(+)) (277 aa).

Shikimate-binding positions include S15–S17 and T62. K66 serves as the catalytic Proton acceptor. Shikimate is bound by residues N87 and D102. Residues G127–A131, N151–K156, and I219 contribute to the NADP(+) site. Y221 serves as a coordination point for shikimate. G242 lines the NADP(+) pocket.

It belongs to the shikimate dehydrogenase family. Homodimer.

It carries out the reaction shikimate + NADP(+) = 3-dehydroshikimate + NADPH + H(+). Its pathway is metabolic intermediate biosynthesis; chorismate biosynthesis; chorismate from D-erythrose 4-phosphate and phosphoenolpyruvate: step 4/7. Involved in the biosynthesis of the chorismate, which leads to the biosynthesis of aromatic amino acids. Catalyzes the reversible NADPH linked reduction of 3-dehydroshikimate (DHSA) to yield shikimate (SA). In Bacillus cereus (strain G9842), this protein is Shikimate dehydrogenase (NADP(+)).